A 180-amino-acid polypeptide reads, in one-letter code: 3-hydroxyanthranilate 3,4-dioxygenase (180 aa).

Arg-46 contacts O2. Fe cation-binding residues include His-50, Glu-56, and His-94. Glu-56 is a substrate binding site. Substrate is bound by residues Arg-98 and Glu-109. Fe cation is bound by residues Cys-124, Cys-127, Cys-161, and Cys-164.

The protein belongs to the 3-HAO family. Homodimer. The cofactor is Fe(2+).

It catalyses the reaction 3-hydroxyanthranilate + O2 = (2Z,4Z)-2-amino-3-carboxymuconate 6-semialdehyde. The protein operates within cofactor biosynthesis; NAD(+) biosynthesis; quinolinate from L-kynurenine: step 3/3. Catalyzes the oxidative ring opening of 3-hydroxyanthranilate to 2-amino-3-carboxymuconate semialdehyde, which spontaneously cyclizes to quinolinate. This Jannaschia sp. (strain CCS1) protein is 3-hydroxyanthranilate 3,4-dioxygenase.